Here is a 553-residue protein sequence, read N- to C-terminus: MFCIQCEQTISTPTTKGCSYTMGMCGKTAEVSDLQDVLIYLLQGVSDYAVKARSVGIVDQAIDAYVCQALFSTLTNVNFDAARIIAFINEAQQNRDSLKSRYEAACLLAGKAPEAATGPAALILTADKAELLAWAPNAAVNRNYKEIGEDILGLRLLCLYGLKGAAAYMEHARVLGQQDDEVGAEFHQIMMFLGTEPTEMQPLIDCAMQIGQMNFKVMALLDKGETETFGHPEPTRVNMKPVAGKAILVSGHDLHDLEKILQQTEGKGINVFTNGEMLPAHAYPAFKKYPHLVGNYGSAWQNQQKEFAAFPGAVVMTSNCIINPNVGKYADRIYTRSIVGWPGVTHIEGDDFSTVIEKALSLDGFPYDEIPHYTMTGFARNALMAAAPAVIDQVKAGNIKHFFLIGGCDGDKQERGYYTEMAKAVPQDSLILTLACGKFKFNDLEFGDINGIPRLLDVGQCNDAYSAIQLALALAEAFECGVNDLPLSLVLSWFEQKAIVILLTLLSLGVKGIRVGPSVPGFLTPNLLNFLNETFDLRPITTVEQDLKDILAA.

Positions 3, 6, 18, and 25 each coordinate [2Fe-2S] cluster. Residues histidine 252, glutamate 276, cysteine 320, cysteine 408, cysteine 436, cysteine 461, glutamate 495, and lysine 497 each contribute to the hybrid [4Fe-2O-2S] cluster site. Cysteine 408 is subject to Cysteine persulfide.

This sequence belongs to the HCP family. Requires [2Fe-2S] cluster as cofactor. Hybrid [4Fe-2O-2S] cluster serves as cofactor.

The protein localises to the cytoplasm. The catalysed reaction is A + NH4(+) + H2O = hydroxylamine + AH2 + H(+). In terms of biological role, catalyzes the reduction of hydroxylamine to form NH(3) and H(2)O. The protein is Hydroxylamine reductase of Tolumonas auensis (strain DSM 9187 / NBRC 110442 / TA 4).